Consider the following 522-residue polypeptide: Peptide chain release factor 3 (522 aa).

Residues 9–276 (KKRRTFAIIS…SFVNLAPAPQ (268 aa)) enclose the tr-type G domain. GTP contacts are provided by residues 18–25 (SHPDAGKT), 86–90 (DTPGH), and 140–143 (NKLD).

This sequence belongs to the TRAFAC class translation factor GTPase superfamily. Classic translation factor GTPase family. PrfC subfamily.

The protein resides in the cytoplasm. Its function is as follows. Increases the formation of ribosomal termination complexes and stimulates activities of RF-1 and RF-2. It binds guanine nucleotides and has strong preference for UGA stop codons. It may interact directly with the ribosome. The stimulation of RF-1 and RF-2 is significantly reduced by GTP and GDP, but not by GMP. The polypeptide is Peptide chain release factor 3 (Lactobacillus johnsonii (strain CNCM I-12250 / La1 / NCC 533)).